The following is a 243-amino-acid chain: tRNA (guanine-N(1)-)-methyltransferase (243 aa).

S-adenosyl-L-methionine-binding positions include Gly112 and Leu131–Leu136.

Belongs to the RNA methyltransferase TrmD family. As to quaternary structure, homodimer.

It is found in the cytoplasm. The enzyme catalyses guanosine(37) in tRNA + S-adenosyl-L-methionine = N(1)-methylguanosine(37) in tRNA + S-adenosyl-L-homocysteine + H(+). Functionally, specifically methylates guanosine-37 in various tRNAs. This is tRNA (guanine-N(1)-)-methyltransferase from Leuconostoc mesenteroides subsp. mesenteroides (strain ATCC 8293 / DSM 20343 / BCRC 11652 / CCM 1803 / JCM 6124 / NCDO 523 / NBRC 100496 / NCIMB 8023 / NCTC 12954 / NRRL B-1118 / 37Y).